The primary structure comprises 704 residues: Elongation factor G (704 aa).

A tr-type G domain is found at 8–290 (EKYRNIGICA…GVVRYLPAPN (283 aa)). GTP-binding positions include 17–24 (AHVDAGKT), 88–92 (DTPGH), and 142–145 (NKMD).

The protein belongs to the TRAFAC class translation factor GTPase superfamily. Classic translation factor GTPase family. EF-G/EF-2 subfamily.

It is found in the cytoplasm. Functionally, catalyzes the GTP-dependent ribosomal translocation step during translation elongation. During this step, the ribosome changes from the pre-translocational (PRE) to the post-translocational (POST) state as the newly formed A-site-bound peptidyl-tRNA and P-site-bound deacylated tRNA move to the P and E sites, respectively. Catalyzes the coordinated movement of the two tRNA molecules, the mRNA and conformational changes in the ribosome. This chain is Elongation factor G, found in Francisella tularensis subsp. holarctica (strain FTNF002-00 / FTA).